A 410-amino-acid polypeptide reads, in one-letter code: Cysteine desulfurase (410 aa).

K227 is modified (N6-(pyridoxal phosphate)lysine). The active-site Cysteine persulfide intermediate is C365.

Belongs to the class-V pyridoxal-phosphate-dependent aminotransferase family. Csd subfamily. In terms of assembly, homodimer. Interacts with SufE and the SufBCD complex composed of SufB, SufC and SufD. The interaction with SufE is required to mediate the direct transfer of the sulfur atom from the S-sulfanylcysteine. It depends on pyridoxal 5'-phosphate as a cofactor.

The protein localises to the cytoplasm. The enzyme catalyses (sulfur carrier)-H + L-cysteine = (sulfur carrier)-SH + L-alanine. It catalyses the reaction L-selenocysteine + AH2 = hydrogenselenide + L-alanine + A + H(+). The protein operates within cofactor biosynthesis; iron-sulfur cluster biosynthesis. In terms of biological role, cysteine desulfurases mobilize the sulfur from L-cysteine to yield L-alanine, an essential step in sulfur metabolism for biosynthesis of a variety of sulfur-containing biomolecules. Component of the suf operon, which is activated and required under specific conditions such as oxidative stress and iron limitation. Acts as a potent selenocysteine lyase in vitro, that mobilizes selenium from L-selenocysteine. Selenocysteine lyase activity is however unsure in vivo. The sequence is that of Cysteine desulfurase from Wigglesworthia glossinidia brevipalpis.